We begin with the raw amino-acid sequence, 428 residues long: Enolase (428 aa).

Position 163 (Q163) interacts with (2R)-2-phosphoglycerate. The active-site Proton donor is E205. Mg(2+) is bound by residues D242, E283, and D310. Positions 335, 364, 365, and 386 each coordinate (2R)-2-phosphoglycerate. The Proton acceptor role is filled by K335.

Belongs to the enolase family. Mg(2+) serves as cofactor.

It localises to the cytoplasm. The protein resides in the secreted. The protein localises to the cell surface. It carries out the reaction (2R)-2-phosphoglycerate = phosphoenolpyruvate + H2O. It participates in carbohydrate degradation; glycolysis; pyruvate from D-glyceraldehyde 3-phosphate: step 4/5. Catalyzes the reversible conversion of 2-phosphoglycerate (2-PG) into phosphoenolpyruvate (PEP). It is essential for the degradation of carbohydrates via glycolysis. The polypeptide is Enolase (Sulfurihydrogenibium sp. (strain YO3AOP1)).